A 415-amino-acid polypeptide reads, in one-letter code: Putative serine/threonine-protein phosphatase 4 regulatory subunit 1-like (415 aa).

HEAT repeat units follow at residues 86 to 124 (VMEI…SNFP), 163 to 202 (LLPR…TEKF), 203 to 241 (LIPK…RRTQ), and 242 to 280 (LFPL…RAGL). Over residues 301–318 (FASGSPAPSSGGNTSPAS) the composition is skewed to low complexity. The tract at residues 301–362 (FASGSPAPSS…GPAESPVESC (62 aa)) is disordered.

May be a regulatory subunit of serine/threonine-protein phosphatase 4. This is Putative serine/threonine-protein phosphatase 4 regulatory subunit 1-like (PPP4R1L) from Homo sapiens (Human).